The following is a 387-amino-acid chain: Cytochrome b (387 aa).

The chain crosses the membrane as a helical span at residues 32–52 (LGSLLGLCLVIQIASGVFLAM). Heme b is bound by residues His82 and His96. 8 helical membrane-spanning segments follow: residues 85 to 105 (GASFFFICMYLHIGKALYYGS), 116 to 136 (IGVVIFILTMAIAFMGYCLVY), 151 to 171 (LSAIPFIGNDIVPFIWGGFSV), 179 to 199 (FFALHFLLPFILAALVCMHLM), 225 to 245 (FIFKDLITVFVFLLIFSLFVF), 289 to 309 (LGGVIAMFGAILILLSLPYTD), 324 to 344 (LAFYLFVFNFILLGNLGQLHV), and 350 to 370 (QLGQFATAYYFAHYIIVVPVI). Heme b contacts are provided by His183 and His197.

It belongs to the cytochrome b family. As to quaternary structure, component of the ubiquinol-cytochrome c oxidoreductase (cytochrome b-c1 complex, complex III, CIII), a multisubunit enzyme composed of 10 subunits. The complex is composed of 3 respiratory subunits cytochrome b (COB), cytochrome c1 (CYT1) and Rieske protein (RIP1), 2 core protein subunits COR1 and QCR2, and 5 low-molecular weight protein subunits QCR6, QCR7, QCR8, QCR9 and QCR10. The complex exists as an obligatory dimer and forms supercomplexes (SCs) in the inner mitochondrial membrane with a monomer or a dimer of cytochrome c oxidase (complex IV, CIV), resulting in 2 different assemblies (supercomplexes III(2)IV and III(2)IV(2)). Heme b serves as cofactor.

The protein localises to the mitochondrion inner membrane. Component of the ubiquinol-cytochrome c oxidoreductase, a multisubunit transmembrane complex that is part of the mitochondrial electron transport chain which drives oxidative phosphorylation. The complex plays an important role in the uptake of multiple carbon sources present in different host niches. This Candida albicans (strain SC5314 / ATCC MYA-2876) (Yeast) protein is Cytochrome b.